Consider the following 165-residue polypeptide: Copper-resistant cuproprotein CopI (165 aa).

A signal peptide spans 1-23 (MKNRILRPALLCVAALFATTAQA). Residues 25 to 42 (AGHDHGSAHAGAHAHDAD) are compositionally biased toward basic and acidic residues. A disordered region spans residues 25 to 50 (AGHDHGSAHAGAHAHDADTPYGRPGD). Cu(2+) is bound by residues His-93, Cys-148, His-153, and Met-158.

This sequence belongs to the CopI family. In terms of assembly, monomer.

The protein resides in the periplasm. In terms of biological role, involved in copper tolerance. Required for copper resistance under both aerobic and anaerobic photosynthetic growth conditions. Binds copper. Could be an important defense against copper in the periplasm and may protect not only c type cytochromes but also other proteins with cysteine residues from copper ions that may catalyze nonnative disulfide bond formation. This Rubrivivax gelatinosus (Rhodocyclus gelatinosus) protein is Copper-resistant cuproprotein CopI.